A 61-amino-acid chain; its full sequence is DNA gyrase inhibitor YacG (61 aa).

The Zn(2+) site is built by Cys-14, Cys-17, Cys-29, and Cys-33.

It belongs to the DNA gyrase inhibitor YacG family. Interacts with GyrB. Requires Zn(2+) as cofactor.

In terms of biological role, inhibits all the catalytic activities of DNA gyrase by preventing its interaction with DNA. Acts by binding directly to the C-terminal domain of GyrB, which probably disrupts DNA binding by the gyrase. The polypeptide is DNA gyrase inhibitor YacG (Zymomonas mobilis subsp. mobilis (strain ATCC 31821 / ZM4 / CP4)).